Consider the following 119-residue polypeptide: Ribonuclease P protein component (119 aa).

Belongs to the RnpA family. As to quaternary structure, consists of a catalytic RNA component (M1 or rnpB) and a protein subunit.

The enzyme catalyses Endonucleolytic cleavage of RNA, removing 5'-extranucleotides from tRNA precursor.. RNaseP catalyzes the removal of the 5'-leader sequence from pre-tRNA to produce the mature 5'-terminus. It can also cleave other RNA substrates such as 4.5S RNA. The protein component plays an auxiliary but essential role in vivo by binding to the 5'-leader sequence and broadening the substrate specificity of the ribozyme. This Klebsiella pneumoniae (strain 342) protein is Ribonuclease P protein component.